We begin with the raw amino-acid sequence, 152 residues long: Deoxyuridine 5'-triphosphate nucleotidohydrolase (152 aa).

Substrate contacts are provided by residues 71–73, Asn84, 88–90, and Met98; these read RSG and LID.

This sequence belongs to the dUTPase family. Mg(2+) is required as a cofactor.

It carries out the reaction dUTP + H2O = dUMP + diphosphate + H(+). It participates in pyrimidine metabolism; dUMP biosynthesis; dUMP from dCTP (dUTP route): step 2/2. This enzyme is involved in nucleotide metabolism: it produces dUMP, the immediate precursor of thymidine nucleotides and it decreases the intracellular concentration of dUTP so that uracil cannot be incorporated into DNA. This is Deoxyuridine 5'-triphosphate nucleotidohydrolase from Salmonella arizonae (strain ATCC BAA-731 / CDC346-86 / RSK2980).